We begin with the raw amino-acid sequence, 219 residues long: UPF0619 GPI-anchored membrane protein AFUA_3G00880 (219 aa).

Residues 1-16 form the signal peptide; it reads MRFALTLTAFVGSVAA. The N-linked (GlcNAc...) asparagine glycan is linked to asparagine 85. Disordered stretches follow at residues 107-144 and 160-205; these read SQQF…GTVS and SSTL…SLTV. Positions 114-144 are enriched in low complexity; sequence SSGSSTTSDSTSSASATGSASTSSSSTGTVS. The GPI-like-anchor amidated asparagine moiety is linked to residue asparagine 198. A propeptide spans 199–219 (removed in mature form); that stretch reads GAGSLTVPAGSLLLGLVALAL.

This sequence belongs to the UPF0619 family. The GPI-like anchor contains a phosphoceramide lipid group. The anchor position has not been determined.

The protein localises to the cell membrane. This chain is UPF0619 GPI-anchored membrane protein AFUA_3G00880, found in Aspergillus fumigatus (strain ATCC MYA-4609 / CBS 101355 / FGSC A1100 / Af293) (Neosartorya fumigata).